The following is a 114-amino-acid chain: Ribosome-binding factor A (114 aa).

It belongs to the RbfA family. In terms of assembly, monomer. Binds 30S ribosomal subunits, but not 50S ribosomal subunits or 70S ribosomes.

It localises to the cytoplasm. Functionally, one of several proteins that assist in the late maturation steps of the functional core of the 30S ribosomal subunit. Associates with free 30S ribosomal subunits (but not with 30S subunits that are part of 70S ribosomes or polysomes). Required for efficient processing of 16S rRNA. May interact with the 5'-terminal helix region of 16S rRNA. In Macrococcus caseolyticus (strain JCSC5402) (Macrococcoides caseolyticum), this protein is Ribosome-binding factor A.